A 310-amino-acid chain; its full sequence is Methionyl-tRNA formyltransferase (310 aa).

(6S)-5,6,7,8-tetrahydrofolate is bound at residue 111–114 (SLLP).

It belongs to the Fmt family.

The enzyme catalyses L-methionyl-tRNA(fMet) + (6R)-10-formyltetrahydrofolate = N-formyl-L-methionyl-tRNA(fMet) + (6S)-5,6,7,8-tetrahydrofolate + H(+). Functionally, attaches a formyl group to the free amino group of methionyl-tRNA(fMet). The formyl group appears to play a dual role in the initiator identity of N-formylmethionyl-tRNA by promoting its recognition by IF2 and preventing the misappropriation of this tRNA by the elongation apparatus. This chain is Methionyl-tRNA formyltransferase, found in Rhodopseudomonas palustris (strain BisB5).